We begin with the raw amino-acid sequence, 249 residues long: Receptor-transporting protein 4 (249 aa).

The Cytoplasmic segment spans residues 1–227 (MLFPDDFSTW…QGCREPPQRE (227 aa)). The segment at 50 to 162 (TVLGRFQCSR…DTRNCEACSL (113 aa)) adopts a 3CxxC-type zinc-finger fold. The interval 173-208 (KVKPPRSPSPLPKSSSPSKSCPPPPQTRNTDFGNKT) is disordered. Over residues 199 to 208 (TRNTDFGNKT) the composition is skewed to polar residues. The helical transmembrane segment at 228–248 (IEPPLFLFLSIAAFALFSLFT) threads the bilayer.

Belongs to the TMEM7 family. Interacts with TASR16. Interacts with OPRD1 and OPRM1; the interaction promotes cell surface localization of the OPDR1-OPRM1 heterodimer. Expressed at low levels in olfactory neurons. Upon viral infection, highly expressed in brain and different cells of nervous tissue.

It localises to the membrane. Its subcellular location is the cytoplasm. Chaperone protein that facilitates the trafficking and functional cell surface expression of some G-protein coupled receptors (GPCRs). Promotes functional expression of the bitter taste receptor TAS2R16. Also promotes functional expression of the opioid receptor heterodimer OPRD1-OPRM1. In addition, acts as a potent IFN-inducible suppressor of pathogens including lyssavirus rabies, influenza A or yellow fever virus. Mechanistically, associates with the viral replicase, binds viral RNA, and thereby suppresses viral genome amplification that replicates at the endoplasmic reticulum. In addition, restores antiviral signaling by interacting with and sequestering influenza virus protein NS1. The chain is Receptor-transporting protein 4 (Rtp4) from Mus musculus (Mouse).